The chain runs to 78 residues: MLKIRLKRFGRKRQPSYRIIVIDSRKPRDGRPIEEIGFYSPLNNKSKINLIQVKKRIYQGAQPTKKVQQIISQFEKQN.

Belongs to the bacterial ribosomal protein bS16 family.

Its subcellular location is the plastid. It localises to the chloroplast. In Gracilaria tenuistipitata var. liui (Red alga), this protein is Small ribosomal subunit protein bS16c.